We begin with the raw amino-acid sequence, 280 residues long: Shikimate dehydrogenase (NADP(+)) (280 aa).

Residues 23-25 (SLS) and T70 each bind shikimate. The Proton acceptor role is filled by K74. Shikimate-binding residues include N95 and D111. Residues 135–139 (GSGGA), 158–163 (NRTISK), and I221 each bind NADP(+). Y223 is a shikimate binding site. Residue G247 participates in NADP(+) binding.

It belongs to the shikimate dehydrogenase family. As to quaternary structure, homodimer.

It catalyses the reaction shikimate + NADP(+) = 3-dehydroshikimate + NADPH + H(+). The protein operates within metabolic intermediate biosynthesis; chorismate biosynthesis; chorismate from D-erythrose 4-phosphate and phosphoenolpyruvate: step 4/7. In terms of biological role, involved in the biosynthesis of the chorismate, which leads to the biosynthesis of aromatic amino acids. Catalyzes the reversible NADPH linked reduction of 3-dehydroshikimate (DHSA) to yield shikimate (SA). The chain is Shikimate dehydrogenase (NADP(+)) from Buchnera aphidicola subsp. Cinara cedri (strain Cc).